The following is a 347-amino-acid chain: Coproporphyrinogen-III oxidase, aerobic 2 (347 aa).

Residues 1–31 form a disordered region; it reads MGRHSDNSLQESANHTVLLTSPTNTIPKDSR. The segment covering 7 to 31 has biased composition (polar residues); it reads NSLQESANHTVLLTSPTNTIPKDSR. An important for dimerization region spans residues 75–84; sequence VIREGRVFEQ. Ser119 lines the substrate pocket. The active-site Proton donor is the His133. Residues 135–137 and 305–310 each bind substrate; these read NYR and KGRTES. The important for dimerization stretch occupies residues 287-322; the sequence is YVEFNLVYDRGTVFGLQTKGRTESILMSLPPLARWE.

It belongs to the aerobic coproporphyrinogen-III oxidase family. Homodimer.

It is found in the cytoplasm. It catalyses the reaction coproporphyrinogen III + O2 + 2 H(+) = protoporphyrinogen IX + 2 CO2 + 2 H2O. The protein operates within porphyrin-containing compound metabolism; protoporphyrin-IX biosynthesis; protoporphyrinogen-IX from coproporphyrinogen-III (O2 route): step 1/1. Its function is as follows. Key enzyme in heme biosynthesis. Catalyzes the oxidative decarboxylation of propionic acid side chains of rings A and B of coproporphyrinogen III. The polypeptide is Coproporphyrinogen-III oxidase, aerobic 2 (Nostoc sp. (strain PCC 7120 / SAG 25.82 / UTEX 2576)).